The sequence spans 854 residues: Protein mono-ADP-ribosyltransferase PARP8 (854 aa).

Disordered regions lie at residues 113–138 (NGEESRQNSTVEEDSEGDNDSEEFYY) and 291–310 (SYPPPGCGKSKSKLKSEQDG). The span at 123 to 135 (VEEDSEGDNDSEE) shows a compositional bias: acidic residues. ADP-ribosylcysteine is present on residues cysteine 332, cysteine 367, cysteine 376, and cysteine 395. A PARP catalytic domain is found at 617 to 844 (EMTQAPYLEI…QEGGIHKEIL (228 aa)). Positions 750-777 (QKVSAKDEPASSSKSSNTSQSQKKGQQS) are disordered. The span at 760-777 (SSSKSSNTSQSQKKGQQS) shows a compositional bias: low complexity.

It belongs to the ARTD/PARP family. In terms of processing, auto-mono-ADP-ribosylated.

It carries out the reaction L-cysteinyl-[protein] + NAD(+) = S-(ADP-D-ribosyl)-L-cysteinyl-[protein] + nicotinamide + H(+). In terms of biological role, mono-ADP-ribosyltransferase that mediates mono-ADP-ribosylation of target proteins. The chain is Protein mono-ADP-ribosyltransferase PARP8 from Homo sapiens (Human).